The following is a 273-amino-acid chain: F-actin-capping protein subunit alpha (273 aa).

It belongs to the F-actin-capping protein alpha subunit family. As to quaternary structure, component of the F-actin capping complex, composed of a heterodimer of an alpha and a beta subunit.

The protein resides in the cytoplasm. It localises to the cytoskeleton. Its subcellular location is the actin patch. In terms of biological role, F-actin-capping proteins bind in a Ca(2+)-independent manner to the fast growing ends of actin filaments (barbed end) thereby blocking the exchange of subunits at these ends. Unlike other capping proteins (such as gelsolin and severin), these proteins do not sever actin filaments. The protein is F-actin-capping protein subunit alpha (cap1) of Aspergillus oryzae (strain ATCC 42149 / RIB 40) (Yellow koji mold).